The primary structure comprises 265 residues: ATP synthase subunit a (265 aa).

The next 6 membrane-spanning stretches (helical) occupy residues 26-46, 88-108, 132-152, 168-188, 195-217, and 231-251; these read VHLD…FFFY, IGSL…IDLI, DISA…FYTI, PFNH…TLLA, FRLF…MYMA, and LIWA…FMML.

This sequence belongs to the ATPase A chain family. F-type ATPases have 2 components, CF(1) - the catalytic core - and CF(0) - the membrane proton channel. CF(1) has five subunits: alpha(3), beta(3), gamma(1), delta(1), epsilon(1). CF(0) has three main subunits: a(1), b(2) and c(9-12). The alpha and beta chains form an alternating ring which encloses part of the gamma chain. CF(1) is attached to CF(0) by a central stalk formed by the gamma and epsilon chains, while a peripheral stalk is formed by the delta and b chains.

The protein localises to the cell inner membrane. In terms of biological role, key component of the proton channel; it plays a direct role in the translocation of protons across the membrane. The chain is ATP synthase subunit a from Histophilus somni (strain 129Pt) (Haemophilus somnus).